The chain runs to 371 residues: 4-hydroxy-3-methylbut-2-en-1-yl diphosphate synthase (flavodoxin) (371 aa).

[4Fe-4S] cluster contacts are provided by cysteine 270, cysteine 273, cysteine 305, and glutamate 312.

This sequence belongs to the IspG family. Requires [4Fe-4S] cluster as cofactor.

It carries out the reaction (2E)-4-hydroxy-3-methylbut-2-enyl diphosphate + oxidized [flavodoxin] + H2O + 2 H(+) = 2-C-methyl-D-erythritol 2,4-cyclic diphosphate + reduced [flavodoxin]. The protein operates within isoprenoid biosynthesis; isopentenyl diphosphate biosynthesis via DXP pathway; isopentenyl diphosphate from 1-deoxy-D-xylulose 5-phosphate: step 5/6. Its function is as follows. Converts 2C-methyl-D-erythritol 2,4-cyclodiphosphate (ME-2,4cPP) into 1-hydroxy-2-methyl-2-(E)-butenyl 4-diphosphate. This is 4-hydroxy-3-methylbut-2-en-1-yl diphosphate synthase (flavodoxin) from Shewanella sp. (strain W3-18-1).